We begin with the raw amino-acid sequence, 339 residues long: Ketol-acid reductoisomerase (NADP(+)) (339 aa).

The 182-residue stretch at 1 to 182 folds into the KARI N-terminal Rossmann domain; sequence MRVYYDRDAD…GGGRSGIIET (182 aa). Residues 24-27, Arg-48, Ser-51, Ser-53, and 83-86 each bind NADP(+); these read YGSQ and DELQ. The active site involves His-108. Gly-134 contributes to the NADP(+) binding site. One can recognise a KARI C-terminal knotted domain in the interval 183-328; it reads TFREECETDL…GRLRAMMPWI (146 aa). Residues Asp-191, Glu-195, Glu-227, and Glu-231 each coordinate Mg(2+). Ser-252 lines the substrate pocket.

Belongs to the ketol-acid reductoisomerase family. It depends on Mg(2+) as a cofactor.

The catalysed reaction is (2R)-2,3-dihydroxy-3-methylbutanoate + NADP(+) = (2S)-2-acetolactate + NADPH + H(+). It carries out the reaction (2R,3R)-2,3-dihydroxy-3-methylpentanoate + NADP(+) = (S)-2-ethyl-2-hydroxy-3-oxobutanoate + NADPH + H(+). It participates in amino-acid biosynthesis; L-isoleucine biosynthesis; L-isoleucine from 2-oxobutanoate: step 2/4. The protein operates within amino-acid biosynthesis; L-valine biosynthesis; L-valine from pyruvate: step 2/4. Functionally, involved in the biosynthesis of branched-chain amino acids (BCAA). Catalyzes an alkyl-migration followed by a ketol-acid reduction of (S)-2-acetolactate (S2AL) to yield (R)-2,3-dihydroxy-isovalerate. In the isomerase reaction, S2AL is rearranged via a Mg-dependent methyl migration to produce 3-hydroxy-3-methyl-2-ketobutyrate (HMKB). In the reductase reaction, this 2-ketoacid undergoes a metal-dependent reduction by NADPH to yield (R)-2,3-dihydroxy-isovalerate. The protein is Ketol-acid reductoisomerase (NADP(+)) of Rhodospirillum rubrum (strain ATCC 11170 / ATH 1.1.1 / DSM 467 / LMG 4362 / NCIMB 8255 / S1).